Reading from the N-terminus, the 219-residue chain is MNKIQHISFITKKNPLVSYERVGALQNRFVQHYLNYKANKVEQPPKPTIITSQVCPVYTLGRRESSINFTKGFPKAKVVKALRGGQTTFHGPGQILAYPIIDLKSFGLSPREYVSRLEQAIIATCKSFGIEKAHTTKNTGVWVTENDKIAAIGIHLRRNITSHGLALNVSTDLKYFNYIVGCGLYGKNTTSFKDQGVFTDLKSVEKVLVNNLDSFLMSK.

Residues Q43–K219 enclose the BPL/LPL catalytic domain. Substrate contacts are provided by residues R83–H90, A151–G153, and G164–A166. C182 serves as the catalytic Acyl-thioester intermediate.

This sequence belongs to the LipB family.

The enzyme catalyses octanoyl-[ACP] + L-lysyl-[protein] = N(6)-octanoyl-L-lysyl-[protein] + holo-[ACP] + H(+). The protein operates within protein modification; protein lipoylation via endogenous pathway; protein N(6)-(lipoyl)lysine from octanoyl-[acyl-carrier-protein]: step 1/2. Functionally, catalyzes the transfer of endogenously produced octanoic acid from octanoyl-acyl-carrier-protein onto the lipoyl domains of lipoate-dependent enzymes. Lipoyl-ACP can also act as a substrate although octanoyl-ACP is likely to be the physiological substrate. The protein is Probable octanoyltransferase of Schizosaccharomyces pombe (strain 972 / ATCC 24843) (Fission yeast).